The sequence spans 247 residues: Complement C1q subcomponent subunit A (247 aa).

Positions 1–24 (MEAPRGWLVIMISVLAVSLASSAA) are cleaved as a signal peptide. Residues 26 to 116 (DTCRDLDGRD…NPGNIKDQRR (91 aa)) form a disordered region. Over residues 27 to 38 (TCRDLDGRDGAA) the composition is skewed to basic and acidic residues. A Collagen-like domain is found at 33–111 (GRDGAARKPG…KGIKGNPGNI (79 aa)). 4-hydroxyproline is present on residues Pro41 and Pro47. The residue at position 50 (Lys50) is a 5-hydroxylysine. O-linked (Gal...) hydroxylysine glycosylation occurs at Lys50. 4-hydroxyproline is present on residues Pro56 and Pro59. Position 69 is a 5-hydroxylysine (Lys69). Lys69 is a glycosylation site (O-linked (Gal...) hydroxylysine). A 4-hydroxyproline mark is found at Pro81 and Pro87. Residues 98–109 (LPGLKGIKGNPG) show a composition bias toward low complexity. Lys102 carries the 5-hydroxylysine modification. Lys102 is a glycosylation site (O-linked (Gal...) hydroxylysine). In terms of domain architecture, C1q spans 112–247 (KDQRRPAFSA…FSGFLIFPST (136 aa)). Cys174 and Cys192 are disulfide-bonded. Gln201 serves as a coordination point for Ca(2+).

Core component of the complement C1 complex, a calcium-dependent complex composed of 1 molecule of the C1Q subcomplex, 2 molecules of C1R and 2 molecules of C1S. The C1Q subcomplex is composed 18 subunits: 3 chains of C1QA, C1QB, and C1QC trimerize to form 6 collagen-like triple helices connected to six globular ligand-recognition modules (C1q domain). Interacts with CR1 (via Sushi 24 and Sushi 25 domains). Interacts (via C-terminus) with CD33; this interaction activates CD33 inhibitory motifs. O-linked glycans are assumed to be the Glc-Gal disaccharides typically found as secondary modifications of hydroxylated lysines in collagen-like domains.

It is found in the secreted. The protein resides in the cell surface. With respect to regulation, the C1Q subcomplex is inhibited by sulfated molecules, such as triterpenoid sulfates, heparan sulfate, or chondroitin sulfates. Its function is as follows. Core component of the complement C1 complex, a multiprotein complex that initiates the classical pathway of the complement system, a cascade of proteins that leads to phagocytosis and breakdown of pathogens and signaling that strengthens the adaptive immune system. The classical complement pathway is initiated by the C1Q subcomplex of the C1 complex, which specifically binds IgG or IgM immunoglobulins complexed with antigens, forming antigen-antibody complexes on the surface of pathogens: C1QA, together with C1QB and C1QC, specifically recognizes and binds the Fc regions of IgG or IgM via its C1q domain. Immunoglobulin-binding activates the proenzyme C1R, which cleaves C1S, initiating the proteolytic cascade of the complement system. The C1Q subcomplex is activated by a hexamer of IgG complexed with antigens, while it is activated by a pentameric IgM. The C1Q subcomplex also recognizes and binds phosphatidylserine exposed on the surface of cells undergoing programmed cell death, possibly promoting activation of the complement system. In Sus scrofa (Pig), this protein is Complement C1q subcomponent subunit A (C1QA).